Here is a 162-residue protein sequence, read N- to C-terminus: NRR repressor homolog 3 (162 aa).

Residues 1 to 80 (MDPTMPTPHT…GHEEEARDED (80 aa)) form a disordered region. The segment covering 7–24 (TPHTISGTSPFPRNSSTA) has biased composition (polar residues). Basic residues predominate over residues 37-46 (PRHRRSRKRD). Positions 69–80 (GHGHEEEARDED) are enriched in basic and acidic residues.

It belongs to the NPR1-interactor family. In terms of assembly, interacts with NPR1/NH1. Interacts with NPR3/NH3.

It is found in the nucleus. Functionally, binds to and represses NPR1/NH1-mediated transcriptional activation of LG2 in vitro. This chain is NRR repressor homolog 3, found in Oryza sativa subsp. japonica (Rice).